Here is a 72-residue protein sequence, read N- to C-terminus: MAKEESIEVEGEILEALPNAQFRVKLENGLEVLAHVSGKIRMHYIRILPGDKVKVQISPYDLSKGRITYRYK.

One can recognise an S1-like domain in the interval 1-72 (MAKEESIEVE…SKGRITYRYK (72 aa)).

Belongs to the IF-1 family. In terms of assembly, component of the 30S ribosomal translation pre-initiation complex which assembles on the 30S ribosome in the order IF-2 and IF-3, IF-1 and N-formylmethionyl-tRNA(fMet); mRNA recruitment can occur at any time during PIC assembly.

It localises to the cytoplasm. Functionally, one of the essential components for the initiation of protein synthesis. Stabilizes the binding of IF-2 and IF-3 on the 30S subunit to which N-formylmethionyl-tRNA(fMet) subsequently binds. Helps modulate mRNA selection, yielding the 30S pre-initiation complex (PIC). Upon addition of the 50S ribosomal subunit IF-1, IF-2 and IF-3 are released leaving the mature 70S translation initiation complex. The chain is Translation initiation factor IF-1 from Chlorobaculum tepidum (strain ATCC 49652 / DSM 12025 / NBRC 103806 / TLS) (Chlorobium tepidum).